A 200-amino-acid chain; its full sequence is MALAYDGAIQRLIDAFGRLPGIGPKGAQRIAFYMLSAPEDEARDLAEAIEEVKAKIRFCDICGNVCESSPCPVCADPRRDRSVICVVEEPKDVMSIERTREYRGLYHVLGGAINPMANVGPADLRIPSLLKRLEGDEVKEVIMALDPNIEGEATTSYLTQLLRPVGVKVTRLASGLPVGSDLEYADEITLGRALAGRREA.

The C4-type zinc-finger motif lies at 59–74; the sequence is CDICGNVCESSPCPVC. The 96-residue stretch at 82–177 folds into the Toprim domain; the sequence is SVICVVEEPK…KVTRLASGLP (96 aa).

It belongs to the RecR family.

Functionally, may play a role in DNA repair. It seems to be involved in an RecBC-independent recombinational process of DNA repair. It may act with RecF and RecO. This is Recombination protein RecR from Bifidobacterium longum subsp. infantis (strain ATCC 15697 / DSM 20088 / JCM 1222 / NCTC 11817 / S12).